Reading from the N-terminus, the 212-residue chain is Photosynthetic NDH subunit of subcomplex B 5, chloroplastic (212 aa).

The transit peptide at 1 to 48 (MATVTILSPKSIPKVTDSKFGARVSDQIVNVVKCGKSGRRLKLAKLVS) directs the protein to the chloroplast. 2 helical membrane-spanning segments follow: residues 115–135 (FQGL…YFDA) and 136–156 (PGEY…IIEM).

Part of the chloroplast NDH complex, composed of a mixture of chloroplast and nucleus encoded subunits. Component of the NDH subcomplex B, at least composed of PnsB1, PnsB2, PnsB3, PnsB4 and PnsB5.

It is found in the plastid. The protein resides in the chloroplast membrane. Its function is as follows. NDH shuttles electrons from NAD(P)H:plastoquinone, via FMN and iron-sulfur (Fe-S) centers, to quinones in the photosynthetic chain and possibly in a chloroplast respiratory chain. The immediate electron acceptor for the enzyme in this species is believed to be plastoquinone. Couples the redox reaction to proton translocation, and thus conserves the redox energy in a proton gradient. This chain is Photosynthetic NDH subunit of subcomplex B 5, chloroplastic, found in Arabidopsis thaliana (Mouse-ear cress).